The primary structure comprises 236 residues: Small ribosomal subunit protein uS2c (236 aa).

It belongs to the universal ribosomal protein uS2 family.

It localises to the plastid. It is found in the chloroplast. This chain is Small ribosomal subunit protein uS2c (rps2), found in Oenothera biennis (German evening primrose).